Consider the following 295-residue polypeptide: Nucleotide-binding protein BLi03725/BL03417 (295 aa).

Residue 16–23 participates in ATP binding; it reads GMSGAGKT. A GTP-binding site is contributed by 67 to 70; the sequence is DLRG.

Belongs to the RapZ-like family.

Its function is as follows. Displays ATPase and GTPase activities. The chain is Nucleotide-binding protein BLi03725/BL03417 from Bacillus licheniformis (strain ATCC 14580 / DSM 13 / JCM 2505 / CCUG 7422 / NBRC 12200 / NCIMB 9375 / NCTC 10341 / NRRL NRS-1264 / Gibson 46).